The sequence spans 337 residues: B3 domain-containing protein REM16 (337 aa).

2 consecutive DNA-binding regions (TF-B3) follow at residues 22-116 (TLHF…FDGQ) and 223-321 (FLVF…FRGE).

Its subcellular location is the nucleus. This is B3 domain-containing protein REM16 (REM16) from Arabidopsis thaliana (Mouse-ear cress).